A 654-amino-acid chain; its full sequence is NADH-ubiquinone oxidoreductase chain 5 (654 aa).

A run of 16 helical transmembrane segments spans residues 1–21 (MYLA…FLGR), 30–50 (LITC…FYEV), 76–96 (FIYD…SALV), 113–133 (FFAY…GDNY), 135–155 (VMFI…NFWF), 178–198 (FSIG…TTVF), 200–220 (LAPF…LVAA), 241–261 (TPVS…YLLL), 274–294 (LILI…TGLL), 301–320 (VIAY…CGLS), 324–346 (VALF…AGSV), 365–385 (LLPF…ALPF), 406–426 (SGNL…MYSI), 451–471 (PLIM…FGYV), 510–530 (FLPL…YWIF), and 612–632 (TYAM…FFIG).

It belongs to the complex I subunit 5 family.

It localises to the mitochondrion inner membrane. The enzyme catalyses a ubiquinone + NADH + 5 H(+)(in) = a ubiquinol + NAD(+) + 4 H(+)(out). In terms of biological role, core subunit of the mitochondrial membrane respiratory chain NADH dehydrogenase (Complex I) that is believed to belong to the minimal assembly required for catalysis. Complex I functions in the transfer of electrons from NADH to the respiratory chain. The immediate electron acceptor for the enzyme is believed to be ubiquinone. This is NADH-ubiquinone oxidoreductase chain 5 (ND5) from Rhizopus stolonifer (Rhizopus nigricans).